A 381-amino-acid polypeptide reads, in one-letter code: uncharacterized protein (381 aa).

Residues 331–340 (MQNGYANNGR) show a composition bias toward polar residues. Residues 331–381 (MQNGYANNGRNHQRERFERPEKNSKKNKFLPFNGSNKEKKRDKLKKNCVIM) are disordered. Residues 342–354 (HQRERFERPEKNS) show a composition bias toward basic and acidic residues. The segment covering 372–381 (DKLKKNCVIM) has biased composition (basic residues).

Its subcellular location is the cytoplasm. The protein resides in the nucleus. This is an uncharacterized protein from Saccharomyces cerevisiae (strain ATCC 204508 / S288c) (Baker's yeast).